The following is an 813-amino-acid chain: MTSFQEVPLQTSNFAHVIFQNVAKSYLPNAHLECHYTLTPYIHPHPKDWVGIFKVGWSTARDYYTFLWSPMPEHYVEGSTVNCVLAFQGYYLPNDDGEFYQFCYVTHKGEIRGASTPFQFRASSPVEELLTMEDEGNSDMLVVTTKAGLLELKIEKTMKEKEELLKLIAVLEKETAQLREQVGRMERELNHEKERCDQLQAEQKGLTEVTQSLKMENEEFKKRFSDATSKAHQLEEDIVSVTHKAIEKETELDSLKDKLKKAQHEREQLECQLKTEKDEKELYKVHLKNTEIENTKLMSEVQTLKNLDGNKESVITHFKEEIGRLQLCLAEKENLQRTFLLTTSSKEDTFFLKEQLRKAEEQVQATRQEVVFLAKELSDAVNVRDRTMADLHTARLENEKVKKQLADAVAELKLNAMKKDQDKTDTLEHELRREVEDLKLRLQMAADHYKEKFKECQRLQKQINKLSDQSANNNNVFTKKMGNQQKVNDASVNTDPATSASTVDVKPSPSAAEADFDIVTKGQVCEMTKEIADKTEKYNKCKQLLQDEKAKCNKYADELAKMELKWKEQVKIAENVKLELAEVQDNYKLQLAEKDKEISGLTSHLENLSREKELKRSLENQAERKMEGQNSQSPQCLKTCSEQNGYVLTLSNAQPVLQYGNPYASQETRDGADGAFYPDEIQRPPVRVPSWGLEDNVVCSQPARNLSRPDGLEDSEDSKEDENAPTAPDPPSQHLRGHGTGFCFDSSFDVHKKCPLCELMFPPNYDQSKFEEHVESHWKVCPMCSEQFPPDYDQQVFERHVQTHFDQNVLNFD.

3 positions are modified to phosphoserine: serine 124, serine 138, and serine 225. A coiled-coil region spans residues 144–627 (TTKAGLLELK…LENQAERKME (484 aa)). The tract at residues 320–420 (EEIGRLQLCL…ELKLNAMKKD (101 aa)) is oligomerization. Residues 489–502 (DASVNTDPATSAST) are compositionally biased toward polar residues. Residues 489 to 508 (DASVNTDPATSASTVDVKPS) form a disordered region. 3 positions are modified to phosphoserine: serine 617, serine 633, and serine 690. The tract at residues 663–738 (YASQETRDGA…DPPSQHLRGH (76 aa)) is disordered. 2 consecutive UBZ1-type zinc fingers follow at residues 751 to 777 (HKKCPLCELMFPPNYDQSKFEEHVESH) and 778 to 804 (WKVCPMCSEQFPPDYDQQVFERHVQTH). 8 residues coordinate Zn(2+): cysteine 754, cysteine 757, histidine 773, histidine 777, cysteine 781, cysteine 784, histidine 800, and histidine 804.

In terms of assembly, homooligomer. Interacts with TNFAIP3. Interacts with STARD13. Interacts with MYO6. Interacts with TOM1; the interaction is indirect and is mediated by MYO6, which acts as a bridge between TOM1 and TAX1BP1. Interacts with MAVS; this interaction induces MAVS polyubiquitination. Interacts with TNIP1. Interacts with TRAF6; this interaction mediates deubiquitination of TRAF6 and inhibition of NF-kappa-B activation. Interacts with RIPK1; this interaction negatively regulates RIPK1 ubiquitination. Interacts with NBR1. Interacts with TBK1. Interacts with RB1CC1. Interacts with SQSTM1. Interacts with AZI2.

The protein localises to the cytoplasm. It is found in the mitochondrion. Its subcellular location is the preautophagosomal structure. It localises to the cytoplasmic vesicle. The protein resides in the autophagosome. Its function is as follows. Ubiquitin-binding adapter that participates in inflammatory, antiviral and innate immune processes as well as selective autophagy regulation. Plays a key role in the negative regulation of NF-kappa-B and IRF3 signalings by acting as an adapter for the ubiquitin-editing enzyme A20/TNFAIP3 to bind and inactivate its substrates. Disrupts the interactions between the E3 ubiquitin ligase TRAF3 and TBK1/IKBKE to attenuate 'Lys63'-linked polyubiquitination of TBK1 and thereby IFN-beta production. Also recruits A20/TNFAIP3 to ubiquitinated signaling proteins TRAF6 and RIPK1, leading to their deubiquitination and disruption of IL-1 and TNF-induced NF-kappa-B signaling pathways. Inhibits virus-induced apoptosis by inducing the 'Lys-48'-linked polyubiquitination and degradation of MAVS via recruitment of the E3 ligase ITCH, thereby attenuating MAVS-mediated apoptosis signaling. As a macroautophagy/autophagy receptor, facilitates the xenophagic clearance of pathogenic bacteria such as Salmonella typhimurium and Mycobacterium tuberculosis. Upon NBR1 recruitment to the SQSTM1-ubiquitin condensates, acts as the major recruiter of RB1CC1 to these ubiquitin condensates to promote their autophagic degradation. The chain is Tax1-binding protein 1 homolog (TAX1BP1) from Pongo abelii (Sumatran orangutan).